A 510-amino-acid polypeptide reads, in one-letter code: Sucrose transport protein SUC4 (510 aa).

Residues 1 to 34 (MATSDQDRRHRVTRNRPPIARPSTSSSRPVVSPP) are disordered. At 1-45 (MATSDQDRRHRVTRNRPPIARPSTSSSRPVVSPPRSKVSKRVLLR) the chain is on the cytoplasmic side. A compositionally biased stretch (low complexity) spans 21 to 34 (RPSTSSSRPVVSPP). The residue at position 23 (Ser-23) is a Phosphoserine. The helical transmembrane segment at 46 to 66 (VASVACGIQFGWALQLSLLTP) threads the bilayer. Residues 67-71 (YVQEL) are Extracellular-facing. The helical transmembrane segment at 72 to 92 (GIPHAWASVIWLCGPLSGLFV) threads the bilayer. At 93 to 111 (QPLVGHSSDRCTSKYGRRR) the chain is on the cytoplasmic side. Residues 112–132 (PFIVAGAVAISISVMVIGHAA) form a helical membrane-spanning segment. Topologically, residues 133–148 (DIGWAFGDREGKIKPR) are extracellular. A helical membrane pass occupies residues 149 to 169 (AIVAFVLGFWILDVANNMTQG). Residues 170-187 (PCRALLADLTENDNRRTR) are Cytoplasmic-facing. A helical membrane pass occupies residues 188 to 208 (VANGYFSLFMAVGNVLGYATG). The Extracellular portion of the chain corresponds to 209-233 (SYNGWYKIFTFTKTVACNVECANLK). The chain crosses the membrane as a helical span at residues 234–254 (SAFYIDVVFIAITTILSVSAA). Residues 255 to 291 (HEVPLASLASEAHGQTSGTDEAFLSEIFGTFRYFPGN) lie on the Cytoplasmic side of the membrane. The helical transmembrane segment at 292-312 (VWIILLVTALTWIGWFPFILF) threads the bilayer. Residues 313–335 (DTDWMGREIYGGEPNIGTSYSAG) are Extracellular-facing. Residues 336–356 (VSMGALGLMLNSVFLGITSVL) form a helical membrane-spanning segment. Residues 357–365 (MEKLCRKWG) are Cytoplasmic-facing. A helical transmembrane segment spans residues 366 to 386 (AGFVWGISNILMAICFLGMII). Residues 387–402 (TSFVASHLGYIGHEQP) are Extracellular-facing. A helical membrane pass occupies residues 403 to 423 (PASIVFAAVLIFTILGIPLAI). Over 424–443 (TYSVPYALISIRIESLGLGQ) the chain is Cytoplasmic. Residues 444–464 (GLSLGVLNLAIVIPQVIVSVG) form a helical membrane-spanning segment. Over 465-477 (SGPWDQLFGGGNS) the chain is Extracellular. A helical transmembrane segment spans residues 478-498 (PALAVGAATGFIGGIVAILAL). Residues 499-510 (PRTRIQKPIPLP) lie on the Cytoplasmic side of the membrane.

Belongs to the glycoside-pentoside-hexuronide (GPH) cation symporter transporter (TC 2.A.2.4) family. Homodimer. Interacts with SUC2 and SUC3. In terms of tissue distribution, expressed in sink tissues, mostly in minor veins of sink leaves. Localized in companion cells.

The protein resides in the cell membrane. It catalyses the reaction sucrose(out) + H(+)(out) = sucrose(in) + H(+)(in). It functions in the pathway glycan biosynthesis; sucrose metabolism. Functionally, responsible for the transport of sucrose into the cell, with the concomitant uptake of protons (symport system). Can also transport maltose at a lesser rate. May also transport biotin. The protein is Sucrose transport protein SUC4 of Arabidopsis thaliana (Mouse-ear cress).